A 93-amino-acid chain; its full sequence is Defensin alpha 4 (93 aa).

Residues 1-19 (MRTLTLLITLLLLALHTQA) form the signal peptide. The propeptide occupies 20–62 (ESPQERAKAAPDQDMVMEDQDIFISFGGYKGTVLQDAVVKAGQ). Intrachain disulfides connect Cys64–Cys92, Cys66–Cys81, and Cys71–Cys91.

The protein belongs to the alpha-defensin family. Expressed in neutrophils (at protein level). Highest expression in bone marrow and to a much lesser extent in small intestine.

The protein resides in the secreted. In terms of biological role, host-defense peptide that has antimicrobial activity against Gram-positive and Gram-negative bacteria and fungi (in vitro). Exhibits activity against E.coli, A.calcoaceticus, S,aureus and C.albicans. The chain is Defensin alpha 4 from Rattus norvegicus (Rat).